The sequence spans 389 residues: Probable DNA double-strand break repair nuclease NurA (389 aa).

Positions 74 and 151 each coordinate Mn(2+).

It belongs to the NurA family. Mn(2+) is required as a cofactor.

Involved in DNA double-strand break (DSB) repair. Probably acts with HerA to stimulate resection of the 5' strand and produce the long 3' single-strand that is required for RadA loading. This chain is Probable DNA double-strand break repair nuclease NurA, found in Methanocaldococcus jannaschii (strain ATCC 43067 / DSM 2661 / JAL-1 / JCM 10045 / NBRC 100440) (Methanococcus jannaschii).